The chain runs to 250 residues: MKCMIVIPARLASSRLSQKLLLQAGGKSVLQHTYEAALKSSVAEEVIVAVDDPRLAAEVDSFGGQARLTSVDCQSGTDRIAEVALMHEDINILINVQGDEPEIDPKTIDAVAKLLMQHPEADIATAACAIKDRERVEDPNCVKAVLGDDHRAITFSRAAVPHPRDGLTDALLNAEPPNYWQHIGLYAYRREFLLWFATQPPGRLEQIEKLEQLRAIEAGKTIVVAPVEASAPGIDTLEDFRAFTARIESQ.

Belongs to the KdsB family.

The protein resides in the cytoplasm. The catalysed reaction is 3-deoxy-alpha-D-manno-oct-2-ulosonate + CTP = CMP-3-deoxy-beta-D-manno-octulosonate + diphosphate. Its pathway is nucleotide-sugar biosynthesis; CMP-3-deoxy-D-manno-octulosonate biosynthesis; CMP-3-deoxy-D-manno-octulosonate from 3-deoxy-D-manno-octulosonate and CTP: step 1/1. The protein operates within bacterial outer membrane biogenesis; lipopolysaccharide biosynthesis. Activates KDO (a required 8-carbon sugar) for incorporation into bacterial lipopolysaccharide in Gram-negative bacteria. The chain is 3-deoxy-manno-octulosonate cytidylyltransferase from Rhodopirellula baltica (strain DSM 10527 / NCIMB 13988 / SH1).